A 281-amino-acid polypeptide reads, in one-letter code: UPF0162 protein PD_0709 (281 aa).

TPR repeat units lie at residues 193–226 (VRILRNLHSVYANTDRWDRAARCADRILKLVPNQ) and 227–260 (PEALRDRGLAYLQLGHRSGALNDLKRYLQLYPST).

The protein belongs to the UPF0162 family.

In Xylella fastidiosa (strain Temecula1 / ATCC 700964), this protein is UPF0162 protein PD_0709.